Here is a 231-residue protein sequence, read N- to C-terminus: Large ribosomal subunit protein uL1 (231 aa).

It belongs to the universal ribosomal protein uL1 family. Part of the 50S ribosomal subunit.

Binds directly to 23S rRNA. The L1 stalk is quite mobile in the ribosome, and is involved in E site tRNA release. Its function is as follows. Protein L1 is also a translational repressor protein, it controls the translation of the L11 operon by binding to its mRNA. The chain is Large ribosomal subunit protein uL1 from Dechloromonas aromatica (strain RCB).